The primary structure comprises 329 residues: Biotin synthase (329 aa).

The region spanning 46–275 (FFGRRLKLVR…LNPKAELRAS (230 aa)) is the Radical SAM core domain. Cysteine 64, cysteine 68, and cysteine 71 together coordinate [4Fe-4S] cluster. [2Fe-2S] cluster-binding residues include cysteine 108, cysteine 140, cysteine 200, and arginine 273.

This sequence belongs to the radical SAM superfamily. Biotin synthase family. As to quaternary structure, homodimer. [4Fe-4S] cluster is required as a cofactor. [2Fe-2S] cluster serves as cofactor.

The catalysed reaction is (4R,5S)-dethiobiotin + (sulfur carrier)-SH + 2 reduced [2Fe-2S]-[ferredoxin] + 2 S-adenosyl-L-methionine = (sulfur carrier)-H + biotin + 2 5'-deoxyadenosine + 2 L-methionine + 2 oxidized [2Fe-2S]-[ferredoxin]. It participates in cofactor biosynthesis; biotin biosynthesis; biotin from 7,8-diaminononanoate: step 2/2. Catalyzes the conversion of dethiobiotin (DTB) to biotin by the insertion of a sulfur atom into dethiobiotin via a radical-based mechanism. This chain is Biotin synthase, found in Thermus thermophilus (strain ATCC BAA-163 / DSM 7039 / HB27).